An 89-amino-acid chain; its full sequence is Small ribosomal subunit protein uS15 (89 aa).

A disordered region spans residues 1–23 (MSLDTTEKQQLINANQTHGTDTG). Polar residues predominate over residues 8–23 (KQQLINANQTHGTDTG).

The protein belongs to the universal ribosomal protein uS15 family. In terms of assembly, part of the 30S ribosomal subunit. Forms a bridge to the 50S subunit in the 70S ribosome, contacting the 23S rRNA.

Its function is as follows. One of the primary rRNA binding proteins, it binds directly to 16S rRNA where it helps nucleate assembly of the platform of the 30S subunit by binding and bridging several RNA helices of the 16S rRNA. Forms an intersubunit bridge (bridge B4) with the 23S rRNA of the 50S subunit in the ribosome. In Prochlorococcus marinus (strain MIT 9313), this protein is Small ribosomal subunit protein uS15.